Here is a 424-residue protein sequence, read N- to C-terminus: Serine--tRNA ligase (424 aa).

231–233 lines the L-serine pocket; sequence TAE. 262 to 264 lines the ATP pocket; it reads RAE. Glutamate 285 provides a ligand contact to L-serine. 349 to 352 is an ATP binding site; sequence EISS. Serine 385 lines the L-serine pocket.

Belongs to the class-II aminoacyl-tRNA synthetase family. Type-1 seryl-tRNA synthetase subfamily. As to quaternary structure, homodimer. The tRNA molecule binds across the dimer.

The protein localises to the cytoplasm. The enzyme catalyses tRNA(Ser) + L-serine + ATP = L-seryl-tRNA(Ser) + AMP + diphosphate + H(+). It catalyses the reaction tRNA(Sec) + L-serine + ATP = L-seryl-tRNA(Sec) + AMP + diphosphate + H(+). The protein operates within aminoacyl-tRNA biosynthesis; selenocysteinyl-tRNA(Sec) biosynthesis; L-seryl-tRNA(Sec) from L-serine and tRNA(Sec): step 1/1. Functionally, catalyzes the attachment of serine to tRNA(Ser). Is also able to aminoacylate tRNA(Sec) with serine, to form the misacylated tRNA L-seryl-tRNA(Sec), which will be further converted into selenocysteinyl-tRNA(Sec). This Geobacillus sp. (strain WCH70) protein is Serine--tRNA ligase.